The primary structure comprises 152 residues: Adenosine 5'-monophosphoramidase HNT1 (152 aa).

Residues 8–119 (IFCKIIKGEI…IPKKDEATGL (112 aa)) enclose the HIT domain. AMP is bound by residues 33–34 (DI), asparagine 93, 99–101 (HQV), and 106–108 (HFH). The Histidine triad motif signature appears at 104-108 (HVHFH). The active-site Tele-AMP-histidine intermediate is histidine 106.

Belongs to the HINT family. In terms of assembly, homodimer. It depends on Mg(2+) as a cofactor.

The enzyme catalyses adenosine 5'-phosphoramidate + H2O = AMP + NH4(+). In terms of biological role, hydrolyzes adenosine 5'-monophosphoramidate substrates such as AMP-morpholidate, AMP-N-alanine methyl ester, AMP-alpha-acetyl lysine methyl ester and AMP-NH2. In Candida albicans (strain SC5314 / ATCC MYA-2876) (Yeast), this protein is Adenosine 5'-monophosphoramidase HNT1.